The following is a 124-amino-acid chain: Small ribosomal subunit protein uS12 (124 aa).

Residues 1-32 (MPTISQLIRHGRQKQKKRTKSPALKSSPQRRG) form a disordered region. Positions 9–20 (RHGRQKQKKRTK) are enriched in basic residues. A 3-methylthioaspartic acid modification is found at D89.

This sequence belongs to the universal ribosomal protein uS12 family. Part of the 30S ribosomal subunit. Contacts proteins S8 and S17. May interact with IF1 in the 30S initiation complex.

In terms of biological role, with S4 and S5 plays an important role in translational accuracy. Functionally, interacts with and stabilizes bases of the 16S rRNA that are involved in tRNA selection in the A site and with the mRNA backbone. Located at the interface of the 30S and 50S subunits, it traverses the body of the 30S subunit contacting proteins on the other side and probably holding the rRNA structure together. The combined cluster of proteins S8, S12 and S17 appears to hold together the shoulder and platform of the 30S subunit. This is Small ribosomal subunit protein uS12 from Leptospira borgpetersenii serovar Hardjo-bovis (strain JB197).